A 361-amino-acid polypeptide reads, in one-letter code: Phosphoserine aminotransferase (361 aa).

Residues Ser9 and Arg42 each contribute to the L-glutamate site. Pyridoxal 5'-phosphate contacts are provided by residues 76–77 (AR), Trp102, Thr153, Asp173, and Gln196. Residue Lys197 is modified to N6-(pyridoxal phosphate)lysine. 238–239 (NT) is a pyridoxal 5'-phosphate binding site.

It belongs to the class-V pyridoxal-phosphate-dependent aminotransferase family. SerC subfamily. In terms of assembly, homodimer. It depends on pyridoxal 5'-phosphate as a cofactor.

It is found in the cytoplasm. It catalyses the reaction O-phospho-L-serine + 2-oxoglutarate = 3-phosphooxypyruvate + L-glutamate. The catalysed reaction is 4-(phosphooxy)-L-threonine + 2-oxoglutarate = (R)-3-hydroxy-2-oxo-4-phosphooxybutanoate + L-glutamate. It participates in amino-acid biosynthesis; L-serine biosynthesis; L-serine from 3-phospho-D-glycerate: step 2/3. Its pathway is cofactor biosynthesis; pyridoxine 5'-phosphate biosynthesis; pyridoxine 5'-phosphate from D-erythrose 4-phosphate: step 3/5. Functionally, catalyzes the reversible conversion of 3-phosphohydroxypyruvate to phosphoserine and of 3-hydroxy-2-oxo-4-phosphonooxybutanoate to phosphohydroxythreonine. This is Phosphoserine aminotransferase from Erwinia tasmaniensis (strain DSM 17950 / CFBP 7177 / CIP 109463 / NCPPB 4357 / Et1/99).